The following is a 252-amino-acid chain: MAKFALGHHREASDAGCVRAVLAELILTFLFVFAGVGSAMATGKLAGGGGDTVVGLTAVALAHTLVVAVMVSAGLHVSGGHINPAVTLGLAATGRITLFRSALYVAAQLLGSTLACLLLAFLAVADSGVPVHALGAGVGALRGVLMEAVLTFSLLFAVYATVVDPRRAVGGMGPLLVGLVVGANVLAGGPFSGASMNPARSFGPALVAGVWADHWVYWVGPLIGGPLAGLVYDGLFMAQGGHEPLPRDDTDF.

The next 2 membrane-spanning stretches (helical) occupy residues 20-40 (AVLAELILTFLFVFAGVGSAM) and 53-73 (VVGLTAVALAHTLVVAVMVSA). Residues 83–85 (NPA) carry the NPA 1 motif. A run of 3 helical transmembrane segments spans residues 105–125 (VAAQLLGSTLACLLLAFLAVA), 143–163 (GVLMEAVLTFSLLFAVYATVV), and 168–188 (AVGGMGPLLVGLVVGANVLAG). Positions 197–199 (NPA) match the NPA 2 motif. A helical transmembrane segment spans residues 216 to 236 (VYWVGPLIGGPLAGLVYDGLF).

Belongs to the MIP/aquaporin (TC 1.A.8) family. TIP (TC 1.A.8.10) subfamily.

It localises to the vacuole membrane. In terms of biological role, aquaporins facilitate the transport of water and small neutral solutes across cell membranes. The chain is Aquaporin TIP4-4 (TIP4-4) from Zea mays (Maize).